The primary structure comprises 278 residues: Large ribosomal subunit protein uL2 (278 aa).

2 disordered regions span residues 33–53 and 219–278; these read LTEG…TSRG and LTRG…KKKR. The segment covering 269-278 has biased composition (basic residues); that stretch reads IRSRHAKKKR.

It belongs to the universal ribosomal protein uL2 family. Part of the 50S ribosomal subunit. Forms a bridge to the 30S subunit in the 70S ribosome.

Its function is as follows. One of the primary rRNA binding proteins. Required for association of the 30S and 50S subunits to form the 70S ribosome, for tRNA binding and peptide bond formation. It has been suggested to have peptidyltransferase activity; this is somewhat controversial. Makes several contacts with the 16S rRNA in the 70S ribosome. This Sphingopyxis alaskensis (strain DSM 13593 / LMG 18877 / RB2256) (Sphingomonas alaskensis) protein is Large ribosomal subunit protein uL2.